The following is a 173-amino-acid chain: MDVTIQHPWFKRALGPFYPSRLFDQFFGEGLFEYDLLPFLSSTISPYYRQSLFRTVLDSGISEVRSDRDKFVIFLDVKHFSPEDLTVKVQEDFVEIHGKHNERQDDHGYISREFHRRYRLPSNVDQSALSCSLSADGMLTFSGPKVQSGLDAGHSERAIPVSREEKPSSAPSS.

Met-1 is subject to N-acetylmethionine. The required for complex formation with BFSP1 and BFSP2 stretch occupies residues 1 to 63 (MDVTIQHPWF…RTVLDSGISE (63 aa)). The residue at position 6 (Gln-6) is a Deamidated glutamine; partial. A Phosphoserine modification is found at Ser-45. Position 50 is a deamidated glutamine; partial (Gln-50). Residues 52–162 (LFRTVLDSGI…GHSERAIPVS (111 aa)) form the sHSP domain. Position 70 is an N6-acetyllysine (Lys-70). The residue at position 90 (Gln-90) is a Deamidated glutamine; partial. Lys-99 carries the N6-acetyllysine modification. Residue His-100 coordinates Zn(2+). Position 101 is a deamidated asparagine; partial (Asn-101). Glu-102 and His-107 together coordinate Zn(2+). Ser-122 is subject to Phosphoserine. Asn-123 carries the deamidated asparagine; partial modification. Positions 145-173 (KVQSGLDAGHSERAIPVSREEKPSSAPSS) are disordered. Gln-147 is subject to Deamidated glutamine; partial. Basic and acidic residues predominate over residues 153-167 (GHSERAIPVSREEKP). His-154 is a Zn(2+) binding site. Residue Ser-162 is glycosylated (O-linked (GlcNAc) serine).

It belongs to the small heat shock protein (HSP20) family. Heteromer composed of three CRYAA and one CRYAB subunits. Inter-subunit bridging via zinc ions enhances stability, which is crucial as there is no protein turn over in the lens. Can also form homodimers and homotetramers (dimers of dimers) which serve as the building blocks of homooligomers. Within homooligomers, the zinc-binding motif is created from residues of 3 different molecules. His-100 and Glu-102 from one molecule are ligands of the zinc ion, and His-107 and His-154 residues from additional molecules complete the site with tetrahedral coordination geometry. Part of a complex required for lens intermediate filament formation composed of BFSP1, BFSP2 and CRYAA. Post-translationally, acetylation at Lys-70 may increase chaperone activity. Undergoes age-dependent proteolytical cleavage at the C-terminus.

It is found in the cytoplasm. The protein resides in the nucleus. Functionally, contributes to the transparency and refractive index of the lens. Acts as a chaperone, preventing aggregation of various proteins under a wide range of stress conditions. Required for the correct formation of lens intermediate filaments as part of a complex composed of BFSP1, BFSP2 and CRYAA. The sequence is that of Alpha-crystallin A chain (CRYAA) from Cavia porcellus (Guinea pig).